The following is a 52-amino-acid chain: uncharacterized protein (52 aa).

A disordered region spans residues Met-1–Met-52. Residues Lys-16–Lys-25 are compositionally biased toward basic and acidic residues. Over residues Pro-27 to Met-52 the composition is skewed to gly residues.

This is an uncharacterized protein from Dictyostelium discoideum (Social amoeba).